Reading from the N-terminus, the 496-residue chain is Catalase isozyme 3 (496 aa).

The interval 1-25 (MTMDPTKFRPSSSHDTTVTTTNAGA) is disordered. Over residues 9-23 (RPSSSHDTTVTTTNA) the composition is skewed to polar residues. Active-site residues include His67 and Asn140. Tyr351 is a heme binding site. The tract at residues 402–422 (PLRQAAPPTPLPPRPVAGRRE) is disordered.

This sequence belongs to the catalase family. Homotetramer. The cofactor is heme. Leaf mesophyll cells, pericarp, seedling roots and the coleoptile.

The protein resides in the mitochondrion. It carries out the reaction 2 H2O2 = O2 + 2 H2O. Occurs in almost all aerobically respiring organisms and serves to protect cells from the toxic effects of hydrogen peroxide. Its levels are highest in the light period and are lowest in the dark period, hence it may be important for scavenging hydrogen peroxide at night, rather than during the day. The polypeptide is Catalase isozyme 3 (CAT3) (Zea mays (Maize)).